The chain runs to 211 residues: Protein TMA23 (211 aa).

The disordered stretch occupies residues 115–211 (ASFVVSSASS…SARRDRKEHI (97 aa)). The segment covering 116 to 125 (SFVVSSASSS) has biased composition (low complexity). Basic residues-rich tracts occupy residues 140-149 (VKRKKLKKDK), 158-176 (KKKKKKKSKKESKKGKKSK), and 185-197 (SKHKKSKKSKKHK). Over residues 198-211 (KEESSARRDRKEHI) the composition is skewed to basic and acidic residues.

As to quaternary structure, forms homooligomers. Associates with ribosomal complexes.

It is found in the nucleus. The protein resides in the nucleolus. In terms of biological role, trans-acting factors of the ribosome biogenesis process. This chain is Protein TMA23 (TMA23), found in Saccharomyces cerevisiae (strain ATCC 204508 / S288c) (Baker's yeast).